The chain runs to 216 residues: Ras-related protein RABE1a (216 aa).

GTP is bound at residue G22–S29. Positions F44–F52 match the Effector region motif. GTP-binding positions include D70–Q74, N128–D131, and S159–A160. The segment at D185–T216 is disordered. Positions I193 to T216 are enriched in polar residues. 2 S-geranylgeranyl cysteine lipidation sites follow: C213 and C214.

This sequence belongs to the small GTPase superfamily. Rab family. Interacts with PI5K2.

Its subcellular location is the golgi apparatus membrane. The protein resides in the cell membrane. In terms of biological role, involved in membrane trafficking from the Golgi to the plasma membrane. This chain is Ras-related protein RABE1a (RABE1A), found in Arabidopsis thaliana (Mouse-ear cress).